Consider the following 901-residue polypeptide: Protein translocase subunit SecA (901 aa).

ATP-binding positions include Gln-87, Gly-105–Thr-109, and Asp-512. Zn(2+)-binding residues include Cys-885, Cys-887, Cys-896, and His-897.

This sequence belongs to the SecA family. Monomer and homodimer. Part of the essential Sec protein translocation apparatus which comprises SecA, SecYEG and auxiliary proteins SecDF-YajC and YidC. It depends on Zn(2+) as a cofactor.

It is found in the cell inner membrane. The protein localises to the cytoplasm. It carries out the reaction ATP + H2O + cellular proteinSide 1 = ADP + phosphate + cellular proteinSide 2.. Its function is as follows. Part of the Sec protein translocase complex. Interacts with the SecYEG preprotein conducting channel. Has a central role in coupling the hydrolysis of ATP to the transfer of proteins into and across the cell membrane, serving both as a receptor for the preprotein-SecB complex and as an ATP-driven molecular motor driving the stepwise translocation of polypeptide chains across the membrane. The polypeptide is Protein translocase subunit SecA (Salmonella agona (strain SL483)).